A 349-amino-acid polypeptide reads, in one-letter code: DNA polymerase IV (349 aa).

The 182-residue stretch at Ile7 to Gly188 folds into the UmuC domain. Positions 11 and 106 each coordinate Mg(2+). Residue Glu107 is part of the active site.

The protein belongs to the DNA polymerase type-Y family. In terms of assembly, monomer. Requires Mg(2+) as cofactor.

The protein localises to the cytoplasm. It catalyses the reaction DNA(n) + a 2'-deoxyribonucleoside 5'-triphosphate = DNA(n+1) + diphosphate. Functionally, poorly processive, error-prone DNA polymerase involved in untargeted mutagenesis. Copies undamaged DNA at stalled replication forks, which arise in vivo from mismatched or misaligned primer ends. These misaligned primers can be extended by PolIV. Exhibits no 3'-5' exonuclease (proofreading) activity. May be involved in translesional synthesis, in conjunction with the beta clamp from PolIII. This chain is DNA polymerase IV, found in Francisella tularensis subsp. novicida (strain U112).